We begin with the raw amino-acid sequence, 207 residues long: Holliday junction branch migration complex subunit RuvA (207 aa).

The domain I stretch occupies residues 1-65 (MYDYIRGILT…ETEHVLYGFS (65 aa)). The tract at residues 66-144 (SRRERECFRM…DLLPLDSKAI (79 aa)) is domain II. The interval 145–155 (ASWESVKPSCM) is flexible linker. A domain III region spans residues 155 to 207 (MDEGIQALAALGYSKPSAERMIAEAMSELPENASLAEILPIALKKNLQGLNKS).

It belongs to the RuvA family. Homotetramer. Forms an RuvA(8)-RuvB(12)-Holliday junction (HJ) complex. HJ DNA is sandwiched between 2 RuvA tetramers; dsDNA enters through RuvA and exits via RuvB. An RuvB hexamer assembles on each DNA strand where it exits the tetramer. Each RuvB hexamer is contacted by two RuvA subunits (via domain III) on 2 adjacent RuvB subunits; this complex drives branch migration. In the full resolvosome a probable DNA-RuvA(4)-RuvB(12)-RuvC(2) complex forms which resolves the HJ.

It is found in the cytoplasm. Functionally, the RuvA-RuvB-RuvC complex processes Holliday junction (HJ) DNA during genetic recombination and DNA repair, while the RuvA-RuvB complex plays an important role in the rescue of blocked DNA replication forks via replication fork reversal (RFR). RuvA specifically binds to HJ cruciform DNA, conferring on it an open structure. The RuvB hexamer acts as an ATP-dependent pump, pulling dsDNA into and through the RuvAB complex. HJ branch migration allows RuvC to scan DNA until it finds its consensus sequence, where it cleaves and resolves the cruciform DNA. The polypeptide is Holliday junction branch migration complex subunit RuvA (Chlamydia caviae (strain ATCC VR-813 / DSM 19441 / 03DC25 / GPIC) (Chlamydophila caviae)).